The following is a 93-amino-acid chain: MQEHIIDLSERYALKLNENHVYILYKIELNENGTYQRKGGAVCKDLPSLLDKLIYCELMNEKVETLEDMRNVLHAIHSEVTRIAEIQATYAQA.

This is an uncharacterized protein from Haemophilus influenzae (Bacteriophage HP1).